Consider the following 93-residue polypeptide: Precursor of CEP13 (93 aa).

A signal peptide spans 1–27 (MARPRISISMICLLILIVGFVLQSSQA). A propeptide spanning residues 28 to 78 (RKVLVPYGTSKGLFLSALPKGNVPPSGPSDKGHTSPPDDTDQRMVPENSPE) is cleaved from the precursor. The segment at 45 to 93 (LPKGNVPPSGPSDKGHTSPPDDTDQRMVPENSPEIYRRLESVPSPGVGH) is disordered. Residues Pro-87 and Pro-89 each carry the hydroxyproline modification.

The protein belongs to the C-terminally encoded plant signaling peptide (CEP) family. In terms of assembly, interacts with CEP receptors (e.g. CEPR1 and CEPR2). Post-translationally, the mature small signaling peptide is generated by proteolytic processing of the longer precursor.

The protein localises to the secreted. Its subcellular location is the extracellular space. It localises to the apoplast. Functionally, extracellular signaling peptide that may regulate primary root growth rate and systemic nitrogen (N)-demand signaling. In Arabidopsis thaliana (Mouse-ear cress), this protein is Precursor of CEP13.